Here is a 349-residue protein sequence, read N- to C-terminus: Phosphate acyltransferase (349 aa).

This sequence belongs to the PlsX family. In terms of assembly, homodimer. Probably interacts with PlsY.

It localises to the cytoplasm. It carries out the reaction a fatty acyl-[ACP] + phosphate = an acyl phosphate + holo-[ACP]. The protein operates within lipid metabolism; phospholipid metabolism. Its function is as follows. Catalyzes the reversible formation of acyl-phosphate (acyl-PO(4)) from acyl-[acyl-carrier-protein] (acyl-ACP). This enzyme utilizes acyl-ACP as fatty acyl donor, but not acyl-CoA. This Albidiferax ferrireducens (strain ATCC BAA-621 / DSM 15236 / T118) (Rhodoferax ferrireducens) protein is Phosphate acyltransferase.